The sequence spans 100 residues: Small ribosomal subunit protein uS14c (100 aa).

This sequence belongs to the universal ribosomal protein uS14 family. Part of the 30S ribosomal subunit.

The protein resides in the plastid. It is found in the chloroplast. Functionally, binds 16S rRNA, required for the assembly of 30S particles. This is Small ribosomal subunit protein uS14c from Staurastrum punctulatum (Green alga).